The primary structure comprises 333 residues: Ketol-acid reductoisomerase (NADP(+)) (333 aa).

Residues 2-182 (ANIYYDADCD…GGGRAGILET (181 aa)) enclose the KARI N-terminal Rossmann domain. NADP(+) is bound by residues 25–28 (YGSQ), Lys48, Ser51, Ser53, and 83–86 (DTIQ). The active site involves His108. An NADP(+)-binding site is contributed by Gly134. The KARI C-terminal knotted domain occupies 183-331 (SFREETETDL…KKLRSMMKWL (149 aa)). 4 residues coordinate Mg(2+): Asp191, Glu195, Glu227, and Glu231. Ser252 contacts substrate.

This sequence belongs to the ketol-acid reductoisomerase family. Requires Mg(2+) as cofactor.

The enzyme catalyses (2R)-2,3-dihydroxy-3-methylbutanoate + NADP(+) = (2S)-2-acetolactate + NADPH + H(+). It carries out the reaction (2R,3R)-2,3-dihydroxy-3-methylpentanoate + NADP(+) = (S)-2-ethyl-2-hydroxy-3-oxobutanoate + NADPH + H(+). It participates in amino-acid biosynthesis; L-isoleucine biosynthesis; L-isoleucine from 2-oxobutanoate: step 2/4. Its pathway is amino-acid biosynthesis; L-valine biosynthesis; L-valine from pyruvate: step 2/4. In terms of biological role, involved in the biosynthesis of branched-chain amino acids (BCAA). Catalyzes an alkyl-migration followed by a ketol-acid reduction of (S)-2-acetolactate (S2AL) to yield (R)-2,3-dihydroxy-isovalerate. In the isomerase reaction, S2AL is rearranged via a Mg-dependent methyl migration to produce 3-hydroxy-3-methyl-2-ketobutyrate (HMKB). In the reductase reaction, this 2-ketoacid undergoes a metal-dependent reduction by NADPH to yield (R)-2,3-dihydroxy-isovalerate. This Leptospira borgpetersenii serovar Hardjo-bovis (strain JB197) protein is Ketol-acid reductoisomerase (NADP(+)).